The chain runs to 318 residues: NF-kappa-B inhibitor alpha (318 aa).

A disordered region spans residues 1-44 (MLSAHRPAEPPAVEGCEPPRKERQGGLLPPDDRHDSGLDSMKEE). Residues 17–44 (EPPRKERQGGLLPPDDRHDSGLDSMKEE) show a composition bias toward basic and acidic residues. K21 participates in a covalent cross-link: Glycyl lysine isopeptide (Lys-Gly) (interchain with G-Cter in ubiquitin). At S36 the chain carries Phosphoserine; by IKKA and IKKB. Phosphoserine; by IKKA, IKKB and IKKE is present on S40. Position 46 is a phosphotyrosine; by Tyr-kinases (Y46). 4 ANK repeats span residues 114-143 (LSQT…DLDV), 147-176 (RGNT…PHHL), 186-215 (NGHT…DVNA), and 220-249 (NGRT…DVNK).

It belongs to the NF-kappa-B inhibitor family. In terms of processing, phosphorylated at Ser-36 and Ser-40 by IKKA/CHUK and IKKB/IKBKB; disables inhibition of NF-kappa-B DNA-binding activity. Phosphorylation at positions 36 and 40 is prerequisite to polyubiquitination and subsequent degradation. Post-translationally, monoubiquitinated at Lys-21 following phosphorylation at Ser-36 and Ser-40. The resulting polyubiquitination leads to protein degradation. Hydroxylated by HIF1AN. In terms of tissue distribution, highly expressed in lymph node, thymus followed by liver, brain, muscle, kidney, gastrointestinal and reproductive tract.

It localises to the cytoplasm. It is found in the nucleus. Inhibits the activity of dimeric NF-kappa-B/REL complexes by trapping REL (RELA/p65 and NFKB1/p50) dimers in the cytoplasm by masking their nuclear localization signals. On cellular stimulation by immune and pro-inflammatory responses, becomes phosphorylated promoting ubiquitination and degradation, enabling the dimeric RELA to translocate to the nucleus and activate transcription. The sequence is that of NF-kappa-B inhibitor alpha (NFKBIA) from Gallus gallus (Chicken).